The chain runs to 455 residues: Argininosuccinate lyase (455 aa).

Belongs to the lyase 1 family. Argininosuccinate lyase subfamily.

The protein resides in the cytoplasm. It catalyses the reaction 2-(N(omega)-L-arginino)succinate = fumarate + L-arginine. Its pathway is amino-acid biosynthesis; L-arginine biosynthesis; L-arginine from L-ornithine and carbamoyl phosphate: step 3/3. This Shewanella denitrificans (strain OS217 / ATCC BAA-1090 / DSM 15013) protein is Argininosuccinate lyase.